The chain runs to 600 residues: E3 ubiquitin-protein ligase RLIM (600 aa).

Met1 carries the post-translational modification N-acetylmethionine. The span at 1–11 (MENSDSNDKGS) shows a compositional bias: basic and acidic residues. 3 disordered regions span residues 1–24 (MENS…QMDR), 49–355 (NNLL…ERGG), and 417–497 (SDSE…VTFD). Composition is skewed to polar residues over residues 103–131 (SVRQ…NPNS) and 140–152 (INVN…QTSE). Ser163 carries the phosphoserine modification. Positions 166 to 175 (NMESSSQRQM) are enriched in polar residues. The segment covering 176–187 (ENSASESASARP) has biased composition (low complexity). Phosphoserine occurs at positions 194, 227, and 229. The segment covering 213–228 (RSPEHRRTRARAERSR) has biased composition (basic and acidic residues). Over residues 244-255 (LEQSSENEPEGS) the composition is skewed to polar residues. Ser269 is subject to Phosphoserine. A compositionally biased stretch (low complexity) spans 288–306 (SQGTSSSDTGSNSESSGSG). The segment covering 322 to 332 (RPGEYRQRDSI) has biased composition (basic and acidic residues). The segment covering 333-349 (ASRTRSRSQAPNNTVTY) has biased composition (polar residues). Positions 448-475 (SGSSSSSSPSPSSSGESSESSSEMFEGS) are enriched in low complexity. The RING-type zinc finger occupies 546-587 (CSVCITEYTEGNKLRKLPCSHEYHVHCIDRWLSENSTCPICR). The PDZ-binding motif lies at 597–600 (ESVV).

This sequence belongs to the RNF12 family. Interacts (via N-terminus) with TERF1. Interacts (via C-terminus) with ESR1. Interacts with LIM/homeobox factors such as LHX3. Interacts with LDB1, LDB2 and SIN3A. Interacts with LIMK1.

It is found in the nucleus. The enzyme catalyses S-ubiquitinyl-[E2 ubiquitin-conjugating enzyme]-L-cysteine + [acceptor protein]-L-lysine = [E2 ubiquitin-conjugating enzyme]-L-cysteine + N(6)-ubiquitinyl-[acceptor protein]-L-lysine.. It participates in protein modification; protein ubiquitination. E3 ubiquitin-protein ligase that acts as a negative coregulator for LIM homeodomain transcription factors by mediating the ubiquitination and subsequent degradation of LIM cofactors LDB1 and LDB2 and by mediating the recruitment the SIN3a/histone deacetylase corepressor complex. Ubiquitination and degradation of LIM cofactors LDB1 and LDB2 allows DNA-bound LIM homeodomain transcription factors to interact with other protein partners such as RLIM. Plays a role in telomere length-mediated growth suppression by mediating the ubiquitination and degradation of TERF1. By targeting ZFP42 for degradation, acts as an activator of random inactivation of X chromosome in the embryo, a stochastic process in which one X chromosome is inactivated to minimize sex-related dosage differences of X-encoded genes in somatic cells of female placental mammals. This chain is E3 ubiquitin-protein ligase RLIM (Rlim), found in Mus musculus (Mouse).